Consider the following 287-residue polypeptide: Putative inactive carboxylesterase 4 (287 aa).

The N-terminal stretch at 1–18 (MWLPALVLATLAASAAWA) is a signal peptide. The N-linked (GlcNAc...) asparagine glycan is linked to Asn-80.

It belongs to the type-B carboxylesterase/lipase family. In terms of tissue distribution, expressed in placenta.

The protein resides in the secreted. Has no esterase activity. This chain is Putative inactive carboxylesterase 4 (CES1P1), found in Homo sapiens (Human).